A 708-amino-acid polypeptide reads, in one-letter code: uncharacterized protein (708 aa).

Disordered stretches follow at residues 1–79 (MHAR…RRSS), 119–301 (AGEF…IHQR), 349–390 (YLSH…GDEN), and 410–461 (SNSF…KRQR). Pro residues predominate over residues 65–74 (LPPPLPPPPV). A compositionally biased stretch (polar residues) spans 238–249 (DEAQSKTGSSSA). Low complexity predominate over residues 260-274 (SKVSEGSSSLSAGSG). Residues 410–419 (SNSFPSSILR) show a composition bias toward polar residues. A compositionally biased stretch (basic and acidic residues) spans 442–461 (VGEKRPGEGSDLEEGSKRQR).

This is an uncharacterized protein from Arabidopsis thaliana (Mouse-ear cress).